Here is a 421-residue protein sequence, read N- to C-terminus: 3-isopropylmalate dehydratase large subunit (421 aa).

[4Fe-4S] cluster contacts are provided by Cys-301, Cys-361, and Cys-364.

Belongs to the aconitase/IPM isomerase family. LeuC type 2 subfamily. In terms of assembly, heterodimer of LeuC and LeuD. It depends on [4Fe-4S] cluster as a cofactor.

It catalyses the reaction (2R,3S)-3-isopropylmalate = (2S)-2-isopropylmalate. Its pathway is amino-acid biosynthesis; L-leucine biosynthesis; L-leucine from 3-methyl-2-oxobutanoate: step 2/4. Catalyzes the isomerization between 2-isopropylmalate and 3-isopropylmalate, via the formation of 2-isopropylmaleate. The chain is 3-isopropylmalate dehydratase large subunit from Desulfitobacterium hafniense (strain Y51).